A 470-amino-acid polypeptide reads, in one-letter code: 3-isopropylmalate dehydratase large subunit (470 aa).

[4Fe-4S] cluster is bound by residues C349, C409, and C412.

It belongs to the aconitase/IPM isomerase family. LeuC type 1 subfamily. As to quaternary structure, heterodimer of LeuC and LeuD. [4Fe-4S] cluster is required as a cofactor.

The enzyme catalyses (2R,3S)-3-isopropylmalate = (2S)-2-isopropylmalate. It participates in amino-acid biosynthesis; L-leucine biosynthesis; L-leucine from 3-methyl-2-oxobutanoate: step 2/4. In terms of biological role, catalyzes the isomerization between 2-isopropylmalate and 3-isopropylmalate, via the formation of 2-isopropylmaleate. The protein is 3-isopropylmalate dehydratase large subunit of Campylobacter jejuni subsp. jejuni serotype O:2 (strain ATCC 700819 / NCTC 11168).